The sequence spans 238 residues: Type III pantothenate kinase (238 aa).

Asp-6–Lys-13 provides a ligand contact to ATP. Residues Tyr-90 and Gly-97–Arg-100 contribute to the substrate site. Catalysis depends on Asp-99, which acts as the Proton acceptor. Thr-122 provides a ligand contact to ATP. Substrate is bound at residue Thr-172.

Belongs to the type III pantothenate kinase family. As to quaternary structure, homodimer. NH4(+) is required as a cofactor. The cofactor is K(+).

Its subcellular location is the cytoplasm. It catalyses the reaction (R)-pantothenate + ATP = (R)-4'-phosphopantothenate + ADP + H(+). It participates in cofactor biosynthesis; coenzyme A biosynthesis; CoA from (R)-pantothenate: step 1/5. Functionally, catalyzes the phosphorylation of pantothenate (Pan), the first step in CoA biosynthesis. This is Type III pantothenate kinase from Dechloromonas aromatica (strain RCB).